An 808-amino-acid chain; its full sequence is Dynamin-like protein B (808 aa).

The Dynamin-type G domain maps to 43–340 (FIETPEFVFI…TWRKYLDSVP (298 aa)). The interval 53-60 (GKDGNGKS) is G1 motif. 53–60 (GKDGNGKS) contacts GTP. The G2 motif stretch occupies residues 79–80 (LR). The G3 motif stretch occupies residues 150–153 (EPPS). GTP is bound by residues 150–154 (EPPSV) and 239–242 (NKFH). The interval 239–242 (NKFH) is G4 motif. The G5 motif stretch occupies residues 276 to 279 (PSTA). 2 disordered regions span residues 536 to 565 (SSFR…SSSI) and 665 to 695 (SLNN…NSNH). 2 stretches are compositionally biased toward low complexity: residues 552-565 (SSPS…SSSI) and 665-694 (SLNN…NNSN).

Belongs to the TRAFAC class dynamin-like GTPase superfamily. Dynamin/Fzo/YdjA family.

Its subcellular location is the cytoplasm. It catalyses the reaction GTP + H2O = GDP + phosphate + H(+). Its function is as follows. Involved in cytokinesis. May hydrolyze GTP. This Dictyostelium discoideum (Social amoeba) protein is Dynamin-like protein B (dlpB).